The following is a 65-amino-acid chain: Large ribosomal subunit protein bL35c (65 aa).

This sequence belongs to the bacterial ribosomal protein bL35 family.

The protein localises to the plastid. The protein resides in the cyanelle. This Cyanophora paradoxa protein is Large ribosomal subunit protein bL35c (rpl35).